Reading from the N-terminus, the 215-residue chain is Pyrophosphatase PpaX (215 aa).

D9 functions as the Nucleophile in the catalytic mechanism.

Belongs to the HAD-like hydrolase superfamily. PpaX family. It depends on Mg(2+) as a cofactor.

It carries out the reaction diphosphate + H2O = 2 phosphate + H(+). In terms of biological role, hydrolyzes pyrophosphate formed during P-Ser-HPr dephosphorylation by HPrK/P. Might play a role in controlling the intracellular pyrophosphate pool. This chain is Pyrophosphatase PpaX, found in Anoxybacillus flavithermus (strain DSM 21510 / WK1).